A 92-amino-acid chain; its full sequence is Elongation factor 1-beta (92 aa).

Belongs to the EF-1-beta/EF-1-delta family.

In terms of biological role, promotes the exchange of GDP for GTP in EF-1-alpha/GDP, thus allowing the regeneration of EF-1-alpha/GTP that could then be used to form the ternary complex EF-1-alpha/GTP/AAtRNA. The polypeptide is Elongation factor 1-beta (ef1b) (Pyrobaculum aerophilum (strain ATCC 51768 / DSM 7523 / JCM 9630 / CIP 104966 / NBRC 100827 / IM2)).